The chain runs to 520 residues: Laccase-2 (520 aa).

An N-terminal signal peptide occupies residues 1 to 19 (MRFSNAFVLVAACISSVLA). Plastocyanin-like domains follow at residues 21–145 (TKTF…FVVY), 157–305 (VDDE…LTLA), and 375–488 (TVPV…FAEA). Cu cation contacts are provided by His82 and His84. Intrachain disulfides connect Cys103–Cys509 and Cys135–Cys229. An N-linked (GlcNAc...) asparagine glycan is attached at Asn108. Cu cation-binding residues include His127 and His129. 2 N-linked (GlcNAc...) asparagine glycosylation sites follow: Asn241 and Asn299. Cu cation-binding residues include His417, His420, His422, His470, Cys471, His472, and His476. Residue Asn492 is glycosylated (N-linked (GlcNAc...) asparagine).

The protein belongs to the multicopper oxidase family. It depends on Cu cation as a cofactor.

Its subcellular location is the secreted. It carries out the reaction 4 hydroquinone + O2 = 4 benzosemiquinone + 2 H2O. Functionally, lignin degradation and detoxification of lignin-derived products. The sequence is that of Laccase-2 (lcc2) from Agaricus bisporus (White button mushroom).